Consider the following 138-residue polypeptide: Large ribosomal subunit protein uL16 (138 aa).

Over residues 1 to 16 (MLIPRKVAHRKQHHPG) the composition is skewed to basic residues. The disordered stretch occupies residues 1–24 (MLIPRKVAHRKQHHPGRTGAAKGG).

It belongs to the universal ribosomal protein uL16 family. As to quaternary structure, part of the 50S ribosomal subunit.

Binds 23S rRNA and is also seen to make contacts with the A and possibly P site tRNAs. The chain is Large ribosomal subunit protein uL16 from Frankia alni (strain DSM 45986 / CECT 9034 / ACN14a).